Here is a 367-residue protein sequence, read N- to C-terminus: 3-dehydroquinate synthase (367 aa).

NAD(+)-binding positions include 111 to 115 (GVVGD), 135 to 136 (TS), K148, K157, and 175 to 178 (TLDT). Zn(2+) is bound by residues E190, H254, and H271.

It belongs to the sugar phosphate cyclases superfamily. Dehydroquinate synthase family. The cofactor is Co(2+). Zn(2+) serves as cofactor. It depends on NAD(+) as a cofactor.

The protein localises to the cytoplasm. The catalysed reaction is 7-phospho-2-dehydro-3-deoxy-D-arabino-heptonate = 3-dehydroquinate + phosphate. The protein operates within metabolic intermediate biosynthesis; chorismate biosynthesis; chorismate from D-erythrose 4-phosphate and phosphoenolpyruvate: step 2/7. Functionally, catalyzes the conversion of 3-deoxy-D-arabino-heptulosonate 7-phosphate (DAHP) to dehydroquinate (DHQ). This is 3-dehydroquinate synthase from Salinibacter ruber (strain DSM 13855 / M31).